The following is a 267-amino-acid chain: Small ribosomal subunit protein uS2 (267 aa).

Residues 225 to 267 are disordered; sequence LREQELEGEEQEEAAPATEEEKKELIEEAVAEGEAEETEEEEK. The segment covering 251–267 has biased composition (acidic residues); sequence EEAVAEGEAEETEEEEK.

It belongs to the universal ribosomal protein uS2 family.

In Nitratiruptor sp. (strain SB155-2), this protein is Small ribosomal subunit protein uS2.